A 414-amino-acid polypeptide reads, in one-letter code: GPI mannosyltransferase 1 (414 aa).

The next 10 membrane-spanning stretches (helical) occupy residues 6–26, 87–107, 119–139, 149–171, 183–203, 213–233, 282–302, 316–336, 356–376, and 387–407; these read ISHI…FGLY, YIFM…LSGI, IIML…STRG, IMLS…WLGL, LPSI…VPIV, FLIT…SIYG, MEKF…PLLF, FAFV…FLIF, IVAL…AYQL, and GLLF…SVFI.

This sequence belongs to the PIGM family.

Its subcellular location is the endoplasmic reticulum membrane. Its pathway is glycolipid biosynthesis; glycosylphosphatidylinositol-anchor biosynthesis. Functionally, mannosyltransferase involved in glycosylphosphatidylinositol-anchor biosynthesis. Transfers the first alpha-1,4-mannose to GlcN-acyl-PI during GPI precursor assembly. Required for cell wall integrity. In Debaryomyces hansenii (strain ATCC 36239 / CBS 767 / BCRC 21394 / JCM 1990 / NBRC 0083 / IGC 2968) (Yeast), this protein is GPI mannosyltransferase 1 (GPI14).